Here is a 365-residue protein sequence, read N- to C-terminus: Tartrate dehydrogenase/decarboxylase (365 aa).

Residues D225, D250, and D254 each contribute to the Mn(2+) site.

The protein belongs to the isocitrate and isopropylmalate dehydrogenases family. Homodimer. Requires Mg(2+) as cofactor. The cofactor is Mn(2+). It depends on K(+) as a cofactor.

It localises to the cytoplasm. It catalyses the reaction tartrate + NAD(+) = 2-hydroxy-3-oxosuccinate + NADH + H(+). The enzyme catalyses (2R,3S)-tartrate + NAD(+) = 2-hydroxy-3-oxosuccinate + NADH + H(+). It carries out the reaction (2R,3R)-tartrate + NAD(+) = 2-hydroxy-3-oxosuccinate + NADH + H(+). The catalysed reaction is (2R,3R)-tartrate + H(+) = (R)-glycerate + CO2. It catalyses the reaction (R)-malate + NAD(+) = pyruvate + CO2 + NADH. Its pathway is carbohydrate acid metabolism; tartrate degradation; 2-hydroxy-3-oxosuccinate from L-tartrate: step 1/1. It functions in the pathway carbohydrate acid metabolism; tartrate degradation; 2-hydroxy-3-oxosuccinate from meso-tartrate: step 1/1. It participates in carbohydrate acid metabolism; tartrate degradation; D-glycerate from L-tartrate: step 1/1. Functionally, has multiple catalytic activities. Apart from catalyzing the oxidation of (+)-tartrate to oxaloglycolate, also converts meso-tartrate to D-glycerate and catalyzes the oxidative decarboxylation of D-malate to pyruvate. This Pseudomonas putida (Arthrobacter siderocapsulatus) protein is Tartrate dehydrogenase/decarboxylase.